A 402-amino-acid chain; its full sequence is Dynactin subunit 2 (402 aa).

Positions 1-26 (MADPKYADLPGIARNEPDVYETSDLP) are disordered. 2 coiled-coil regions span residues 101 to 132 (PQQR…SAAE) and 357 to 402 (VHLD…KRLQ).

Belongs to the dynactin subunit 2 family. Subunit of dynactin, a multiprotein complex part of a tripartite complex with dynein and a adapter, such as BICDL1, BICD2 or HOOK3. The dynactin complex is built around ACTR1A/ACTB filament and consists of an actin-related filament composed of a shoulder domain, a pointed end and a barbed end. Its length is defined by its flexible shoulder domain. The soulder is composed of 2 DCTN1 subunits, 4 DCTN2 and 2 DCTN3.

It localises to the cytoplasm. Its subcellular location is the cytoskeleton. It is found in the microtubule organizing center. The protein localises to the centrosome. The protein resides in the membrane. Its function is as follows. Part of the dynactin complex that activates the molecular motor dynein for ultra-processive transport along microtubules. In the dynactin soulder domain, binds the ACTR1A filament and acts as a molecular ruler to determine the length. Modulates cytoplasmic dynein binding to an organelle, and plays a role in prometaphase chromosome alignment and spindle organization during mitosis. Involved in anchoring microtubules to centrosomes. The protein is Dynactin subunit 2 (DCTN2) of Gallus gallus (Chicken).